The primary structure comprises 52 residues: DNA-directed RNA polymerase subunit Rpo12 (52 aa).

Positions 13, 30, and 33 each coordinate Zn(2+).

This sequence belongs to the archaeal Rpo12/eukaryotic RPC10 RNA polymerase subunit family. In terms of assembly, part of the RNA polymerase complex. It depends on Zn(2+) as a cofactor.

It is found in the cytoplasm. The catalysed reaction is RNA(n) + a ribonucleoside 5'-triphosphate = RNA(n+1) + diphosphate. Its function is as follows. DNA-dependent RNA polymerase (RNAP) catalyzes the transcription of DNA into RNA using the four ribonucleoside triphosphates as substrates. The chain is DNA-directed RNA polymerase subunit Rpo12 from Pyrobaculum arsenaticum (strain DSM 13514 / JCM 11321 / PZ6).